A 350-amino-acid polypeptide reads, in one-letter code: MTAVETVLGSITPNLLGRTLTHEHVALDFEHFYRPPPADFESELKAKISMSTLGYVRLYPYSSKENVRFYDEEALEAAKKDVLLYKKHGGGSIVENSSYGLKRNLEFIVELAKSTGVHFIAGTGHYIHAVQDASHASLTVEQMSDLYTKDILTGIEIKGKMVKCGFIGEVASVYPIHEFEKNSIKATGEIQEVLGCGVSFHPHRDAQAPFDIMRLYLEAGGRAQKCVMSHLDRTLFKIEQLVELSELGCYLQYDLFGTECSYYQLNTNVDMISDGQRIENLMKLIEEGLLDRLLMSHDIHTKHRLTSYGGHGYHHIHTNILPRMFARGVTLEQVEQMTVTNPANWLSFDP.

6 residues coordinate a divalent metal cation: His-22, His-24, Glu-169, His-201, His-230, and Asp-298.

This sequence belongs to the metallo-dependent hydrolases superfamily. Phosphotriesterase family. A divalent metal cation is required as a cofactor.

This chain is Phosphotriesterase-related protein, found in Drosophila persimilis (Fruit fly).